Consider the following 392-residue polypeptide: Phosphoglycerate kinase (392 aa).

Substrate-binding positions include 21 to 23, arginine 36, 59 to 62, arginine 118, and arginine 151; these read DFN and HLGR. ATP is bound by residues lysine 201, glycine 292, glutamate 323, and 349–352; that span reads GGDS.

The protein belongs to the phosphoglycerate kinase family. As to quaternary structure, monomer.

It localises to the cytoplasm. It catalyses the reaction (2R)-3-phosphoglycerate + ATP = (2R)-3-phospho-glyceroyl phosphate + ADP. The protein operates within carbohydrate degradation; glycolysis; pyruvate from D-glyceraldehyde 3-phosphate: step 2/5. This chain is Phosphoglycerate kinase, found in Borrelia duttonii (strain Ly).